Reading from the N-terminus, the 511-residue chain is Frizzled/smoothened-like sans CRD protein C (511 aa).

The N-terminal stretch at 1-25 (MNQINKFIKNLYLIIITIILIIVIS) is a signal peptide. At 26 to 93 (NDNNGLFING…QWESYFEMSL (68 aa)) the chain is on the extracellular side. Asparagine 51 is a glycosylation site (N-linked (GlcNAc...) asparagine). Residues 94 to 114 (IMGSISMFASLFLIITYSPLI) form a helical membrane-spanning segment. Over 115–122 (NKKHTRHT) the chain is Cytoplasmic. Residues 123–143 (VGILCMSIGIFFVMVSDGRQL) form a helical membrane-spanning segment. The Extracellular segment spans residues 144–172 (WDIESPGEYKKYCPDTGRYARQSDTKCLT). Residues 173 to 193 (TGLFFQFGCVTAIGWWSILAV) traverse the membrane as a helical segment. Over 194-209 (DLWMTIAKKVQTTKKQ) the chain is Cytoplasmic. Residues 210 to 230 (LLYYLIGINTVSLILTFGPVV) traverse the membrane as a helical segment. Residues 231-253 (KNQYGFGNAAIGCWMLDLKYQYG) are Extracellular-facing. The chain crosses the membrane as a helical span at residues 254 to 274 (FFWIPVGICLSVGSVFIGLIF). At 275-295 (WEIYKISDAVKKRYLKKHIKP) the chain is on the cytoplasmic side. A helical membrane pass occupies residues 296-316 (LCLIVLMCLEFLYMFIYYSYI). Residues 317 to 357 (TANQPTYNKHVAEYIMCLIINAANVPGSYTCQLKTVSPTAQ) are Extracellular-facing. A helical membrane pass occupies residues 358 to 378 (FLFLIAIRLMGLQGLIFYGLT). Over 379-511 (AATKKVWANS…RVNSPDNLQP (133 aa)) the chain is Cytoplasmic. Residues 430-511 (NGYTTGGSDN…RVNSPDNLQP (82 aa)) form a disordered region. Residues 433–443 (TTGGSDNGVGS) show a composition bias toward gly residues. Residues 451 to 460 (KSSSNGGAQD) show a composition bias toward polar residues. Residues 461-485 (NNNNNNNNNNNNNNNNNNNNNNNNN) show a composition bias toward low complexity. Residues 486–511 (SSSLEISGVESNNSTPRVNSPDNLQP) are compositionally biased toward polar residues.

Belongs to the G-protein coupled receptor Fz/Smo family.

Its subcellular location is the membrane. This chain is Frizzled/smoothened-like sans CRD protein C (fscC), found in Dictyostelium discoideum (Social amoeba).